We begin with the raw amino-acid sequence, 275 residues long: MTTLQEKIIQELGVLPTIDPKEEVRKSIDFLKAYLTKHPFLKTFVLGISGGQDSTLAGRLAQLAMTEMREETGDMSYQFIAIRLPYGEQADEADAQAALAFIQPDVSLRVDIKPAVDAMVGSLENAGVQISDFNKGNMKARQRMITQYAVAGENAGAVIGTDHAAENVTAFFTKYGDGGADILPLFRLNKRQGKALLKELGAPEALYLKIPTADLEDDKPLVADEVALGVTYDAIDDYLEGKKVSETDQQTIENWYKKGQHKRHLPITIFDDFWK.

47 to 54 (GISGGQDS) is an ATP binding site. Aspartate 53 serves as a coordination point for Mg(2+). Position 141 (arginine 141) interacts with deamido-NAD(+). Threonine 161 contributes to the ATP binding site. Glutamate 166 serves as a coordination point for Mg(2+). Lysine 174 and aspartate 181 together coordinate deamido-NAD(+). The ATP site is built by lysine 190 and threonine 212. 261–262 (HK) is a deamido-NAD(+) binding site.

Belongs to the NAD synthetase family. In terms of assembly, homodimer.

It catalyses the reaction deamido-NAD(+) + NH4(+) + ATP = AMP + diphosphate + NAD(+) + H(+). The protein operates within cofactor biosynthesis; NAD(+) biosynthesis; NAD(+) from deamido-NAD(+) (ammonia route): step 1/1. In terms of biological role, catalyzes the ATP-dependent amidation of deamido-NAD to form NAD. Uses ammonia as a nitrogen source. The polypeptide is NH(3)-dependent NAD(+) synthetase (Enterococcus faecalis (strain ATCC 700802 / V583)).